Here is a 62-residue protein sequence, read N- to C-terminus: Weak neurotoxin 5 (62 aa).

Intrachain disulfides connect C3–C24, C6–C11, C17–C40, C44–C54, and C55–C60.

This sequence belongs to the three-finger toxin family. Ancestral subfamily. Orphan group II sub-subfamily. As to expression, expressed by the venom gland.

The protein localises to the secreted. Its function is as follows. Binds with low affinity to muscular (alpha-1-beta-1-delta-epsilon/CHRNA1-CHRNB1-CHRND-CHRNE) and very low affinity to neuronal (alpha-7/CHRNA7) nicotinic acetylcholine receptor (nAChR). The protein is Weak neurotoxin 5 of Naja naja (Indian cobra).